An 848-amino-acid polypeptide reads, in one-letter code: Translation initiation factor IF-2 (848 aa).

A disordered region spans residues 1–20 (MNESKGAVDSGLMSGKTERT). In terms of domain architecture, tr-type G spans 346 to 516 (PRAPVVTVMG…LLMAELLELK (171 aa)). Residues 355-362 (GHVDHGKT) are G1. 355 to 362 (GHVDHGKT) is a binding site for GTP. The tract at residues 380–384 (GITQH) is G2. Residues 402–405 (DTPG) form a G3 region. GTP-binding positions include 402 to 406 (DTPGH) and 456 to 459 (NKID). The tract at residues 456–459 (NKID) is G4. Residues 492 to 494 (SAK) are G5.

It belongs to the TRAFAC class translation factor GTPase superfamily. Classic translation factor GTPase family. IF-2 subfamily.

The protein localises to the cytoplasm. In terms of biological role, one of the essential components for the initiation of protein synthesis. Protects formylmethionyl-tRNA from spontaneous hydrolysis and promotes its binding to the 30S ribosomal subunits. Also involved in the hydrolysis of GTP during the formation of the 70S ribosomal complex. This chain is Translation initiation factor IF-2, found in Ehrlichia canis (strain Jake).